The following is a 312-amino-acid chain: Olfactory receptor 4K17 (312 aa).

Residues 1–25 (MKLLNQSQVSEFILLGLTSSQDVEF) lie on the Extracellular side of the membrane. Residue Asn5 is glycosylated (N-linked (GlcNAc...) asparagine). Residues 26 to 49 (LLFALFSVIYVVTVLGNLLIIVTV) traverse the membrane as a helical segment. Over 50–57 (FNTPNLNT) the chain is Cytoplasmic. The helical transmembrane segment at 58 to 79 (PMYFLLGNLSFVDMTLASFATP) threads the bilayer. Topologically, residues 80–100 (KVILNLLKKQKVISFAGCFTQ) are extracellular. A disulfide bridge connects residues Cys97 and Cys189. A helical membrane pass occupies residues 101-120 (IFLLHLLGGVEMVLLVSMAF). At 121-139 (DRYVAICKPLHYMTIMNKK) the chain is on the cytoplasmic side. Residues 140 to 158 (VCVLLVVTSWLLGLLHSGF) traverse the membrane as a helical segment. The Extracellular segment spans residues 159–195 (QIPFAVNLPFCGPNVVDSIFCDLPLVTKLACIDIYFV). Residues 196–219 (QVVIVANSGIISLSCFIILLISYS) traverse the membrane as a helical segment. Over 220–235 (LILITIKNHSPTGQSK) the chain is Cytoplasmic. A helical transmembrane segment spans residues 236 to 258 (ARSTLTAHITVVILFFGPCIFIY). Topologically, residues 259–269 (IWPFGNHSVDK) are extracellular. An N-linked (GlcNAc...) asparagine glycan is attached at Asn264. The chain crosses the membrane as a helical span at residues 270 to 289 (FLAVFYTIITPILNPIIYTL). Topologically, residues 290-312 (RNKEMKISMKKLWRAFVNSREDT) are cytoplasmic.

The protein belongs to the G-protein coupled receptor 1 family.

Its subcellular location is the cell membrane. Its function is as follows. Odorant receptor. The polypeptide is Olfactory receptor 4K17 (OR4K17) (Homo sapiens (Human)).